The following is a 320-amino-acid chain: Lipoyl synthase (320 aa).

The [4Fe-4S] cluster site is built by cysteine 67, cysteine 72, cysteine 78, cysteine 93, cysteine 97, cysteine 100, and serine 307. A Radical SAM core domain is found at 79–296; sequence FNHGTATFMI…RDKAEKMGFE (218 aa).

It belongs to the radical SAM superfamily. Lipoyl synthase family. It depends on [4Fe-4S] cluster as a cofactor.

It is found in the cytoplasm. It carries out the reaction [[Fe-S] cluster scaffold protein carrying a second [4Fe-4S](2+) cluster] + N(6)-octanoyl-L-lysyl-[protein] + 2 oxidized [2Fe-2S]-[ferredoxin] + 2 S-adenosyl-L-methionine + 4 H(+) = [[Fe-S] cluster scaffold protein] + N(6)-[(R)-dihydrolipoyl]-L-lysyl-[protein] + 4 Fe(3+) + 2 hydrogen sulfide + 2 5'-deoxyadenosine + 2 L-methionine + 2 reduced [2Fe-2S]-[ferredoxin]. The protein operates within protein modification; protein lipoylation via endogenous pathway; protein N(6)-(lipoyl)lysine from octanoyl-[acyl-carrier-protein]: step 2/2. Functionally, catalyzes the radical-mediated insertion of two sulfur atoms into the C-6 and C-8 positions of the octanoyl moiety bound to the lipoyl domains of lipoate-dependent enzymes, thereby converting the octanoylated domains into lipoylated derivatives. The chain is Lipoyl synthase from Histophilus somni (strain 129Pt) (Haemophilus somnus).